Reading from the N-terminus, the 425-residue chain is Formyl-CoA:oxalate CoA-transferase (425 aa).

Residues 17 to 18 (QS), R38, 72 to 75 (LDTK), 96 to 98 (NFG), R104, and 136 to 139 (KVYE) each bind CoA. D168 functions as the Nucleophile in the catalytic mechanism. Position 247–249 (247–249 (GGQ)) interacts with substrate.

It belongs to the CoA-transferase III family. Frc subfamily. Homodimer.

It catalyses the reaction formyl-CoA + oxalate = oxalyl-CoA + formate. It functions in the pathway metabolic intermediate degradation; oxalate degradation; CO(2) and formate from oxalate: step 1/2. Involved in the catabolism of oxalate and in the adapatation to low pH via the induction of the oxalate-dependent acid tolerance response (ATR). Catalyzes the transfer of the CoA moiety from formyl-CoA to oxalate. This chain is Formyl-CoA:oxalate CoA-transferase, found in Bradyrhizobium diazoefficiens (strain JCM 10833 / BCRC 13528 / IAM 13628 / NBRC 14792 / USDA 110).